The sequence spans 509 residues: Proton-gated ion channel subunit pbo-5 (509 aa).

An N-terminal signal peptide occupies residues Met-1–Ala-21. Residues Thr-22–Tyr-275 lie on the Extracellular side of the membrane. An intrachain disulfide couples Cys-193 to Cys-207. 3 consecutive transmembrane segments (helical) span residues Met-276–Ala-296, Leu-310–Pro-330, and Val-336–Thr-356. The Cytoplasmic portion of the chain corresponds to Thr-357 to Asp-487. Residues Ile-488 to Leu-508 form a helical membrane-spanning segment.

This sequence belongs to the ligand-gated ion channel (TC 1.A.9) family. Acetylcholine receptor (TC 1.A.9.1) subfamily. The functional channel is a heterooligomer of pbo-5 and pbo-6. May self-associate to form homooligomers with negligible ion channel activity. In terms of tissue distribution, expressed in the posterior body muscles. Also detected in the RIFL, RIFR and RIS head neurons.

It is found in the membrane. In terms of biological role, forms a proton-gated ion channel with pbo-6 that is activated by acidification of the posterior coelomic space, leading to posterior body wall muscle contraction (pBoc) during the defecation cycle. Probably by regulating the defecation motor program, required for fatty acid uptake by intestinal cells. Does not bind neurotransmitters such as acetylcholine, gamma-aminobutyric acid, glycine, serotonin, glutamate or choline. The polypeptide is Proton-gated ion channel subunit pbo-5 (Caenorhabditis elegans).